We begin with the raw amino-acid sequence, 412 residues long: Tyrosine--tRNA ligase (412 aa).

A 'HIGH' region motif is present at residues 56–65; it reads PSAPDVHIGH. A 'KMSKS' region motif is present at residues 240 to 244; that stretch reads KMSKS. K243 contacts ATP. The S4 RNA-binding domain occupies 351–412; that stretch reads VWIVDLLVTL…GKRKFKKLVR (62 aa).

This sequence belongs to the class-I aminoacyl-tRNA synthetase family. TyrS type 2 subfamily. As to quaternary structure, homodimer.

Its subcellular location is the cytoplasm. It catalyses the reaction tRNA(Tyr) + L-tyrosine + ATP = L-tyrosyl-tRNA(Tyr) + AMP + diphosphate + H(+). Its function is as follows. Catalyzes the attachment of tyrosine to tRNA(Tyr) in a two-step reaction: tyrosine is first activated by ATP to form Tyr-AMP and then transferred to the acceptor end of tRNA(Tyr). The sequence is that of Tyrosine--tRNA ligase from Halalkalibacterium halodurans (strain ATCC BAA-125 / DSM 18197 / FERM 7344 / JCM 9153 / C-125) (Bacillus halodurans).